A 141-amino-acid chain; its full sequence is Putative nickel-responsive regulator (141 aa).

Residues H80, H91, H93, and C99 each coordinate Ni(2+).

Belongs to the transcriptional regulatory CopG/NikR family. The cofactor is Ni(2+).

In terms of biological role, transcriptional regulator. In Methanococcus vannielii (strain ATCC 35089 / DSM 1224 / JCM 13029 / OCM 148 / SB), this protein is Putative nickel-responsive regulator.